We begin with the raw amino-acid sequence, 257 residues long: Ubiquinone biosynthesis O-methyltransferase (257 aa).

S-adenosyl-L-methionine-binding residues include Arg-43, Gly-77, Asp-98, and Met-144.

The protein belongs to the methyltransferase superfamily. UbiG/COQ3 family.

It catalyses the reaction a 3-demethylubiquinol + S-adenosyl-L-methionine = a ubiquinol + S-adenosyl-L-homocysteine + H(+). The catalysed reaction is a 3-(all-trans-polyprenyl)benzene-1,2-diol + S-adenosyl-L-methionine = a 2-methoxy-6-(all-trans-polyprenyl)phenol + S-adenosyl-L-homocysteine + H(+). The protein operates within cofactor biosynthesis; ubiquinone biosynthesis. Its function is as follows. O-methyltransferase that catalyzes the 2 O-methylation steps in the ubiquinone biosynthetic pathway. This is Ubiquinone biosynthesis O-methyltransferase from Psychrobacter cryohalolentis (strain ATCC BAA-1226 / DSM 17306 / VKM B-2378 / K5).